Consider the following 352-residue polypeptide: Probable dual-specificity RNA methyltransferase RlmN (352 aa).

The active-site Proton acceptor is E99. The region spanning 105 to 325 is the Radical SAM core domain; it reads EGDRATLCIS…ESHGYTCTIR (221 aa). The cysteines at positions 112 and 336 are disulfide-linked. 3 residues coordinate [4Fe-4S] cluster: C119, C123, and C126. Residues 164 to 165, S196, 217 to 219, and H293 each bind S-adenosyl-L-methionine; these read GE and SLH. C336 acts as the S-methylcysteine intermediate in catalysis.

It belongs to the radical SAM superfamily. RlmN family. Requires [4Fe-4S] cluster as cofactor.

Its subcellular location is the cytoplasm. The catalysed reaction is adenosine(2503) in 23S rRNA + 2 reduced [2Fe-2S]-[ferredoxin] + 2 S-adenosyl-L-methionine = 2-methyladenosine(2503) in 23S rRNA + 5'-deoxyadenosine + L-methionine + 2 oxidized [2Fe-2S]-[ferredoxin] + S-adenosyl-L-homocysteine. It carries out the reaction adenosine(37) in tRNA + 2 reduced [2Fe-2S]-[ferredoxin] + 2 S-adenosyl-L-methionine = 2-methyladenosine(37) in tRNA + 5'-deoxyadenosine + L-methionine + 2 oxidized [2Fe-2S]-[ferredoxin] + S-adenosyl-L-homocysteine. Its function is as follows. Specifically methylates position 2 of adenine 2503 in 23S rRNA and position 2 of adenine 37 in tRNAs. This chain is Probable dual-specificity RNA methyltransferase RlmN, found in Porphyromonas gingivalis (strain ATCC 33277 / DSM 20709 / CIP 103683 / JCM 12257 / NCTC 11834 / 2561).